Consider the following 1018-residue polypeptide: UPF0182 protein Tfu_0541 (1018 aa).

7 helical membrane-spanning segments follow: residues 20–40 (LAPV…AANF), 64–84 (ALLF…SVYF), 115–135 (VFFW…ATAE), 171–191 (VIIG…VVVH), 212–232 (VHLS…YWLE), 254–274 (AVLY…VLFF), and 287–307 (VSLG…PAIV). 2 disordered regions span residues 497–570 (YPVD…QANN) and 939–965 (GDEA…ASSD). 2 stretches are compositionally biased toward acidic residues: residues 542–560 (QDQE…EEEQ) and 939–959 (GDEA…EEEQ).

It belongs to the UPF0182 family.

The protein localises to the cell membrane. The polypeptide is UPF0182 protein Tfu_0541 (Thermobifida fusca (strain YX)).